Reading from the N-terminus, the 192-residue chain is UPF0312 protein PFLU_5725 (192 aa).

An N-terminal signal peptide occupies residues 1–23; that stretch reads MLKKTLAALAIGTALLSAGQVMA.

It belongs to the UPF0312 family. Type 1 subfamily.

It is found in the periplasm. The sequence is that of UPF0312 protein PFLU_5725 from Pseudomonas fluorescens (strain SBW25).